Here is a 443-residue protein sequence, read N- to C-terminus: Exodeoxyribonuclease 7 large subunit (443 aa).

It belongs to the XseA family. Heterooligomer composed of large and small subunits.

The protein localises to the cytoplasm. It catalyses the reaction Exonucleolytic cleavage in either 5'- to 3'- or 3'- to 5'-direction to yield nucleoside 5'-phosphates.. Functionally, bidirectionally degrades single-stranded DNA into large acid-insoluble oligonucleotides, which are then degraded further into small acid-soluble oligonucleotides. This is Exodeoxyribonuclease 7 large subunit from Legionella pneumophila (strain Corby).